An 874-amino-acid chain; its full sequence is Alanine--tRNA ligase (874 aa).

His-562, His-566, Cys-665, and His-669 together coordinate Zn(2+).

Belongs to the class-II aminoacyl-tRNA synthetase family. Zn(2+) serves as cofactor.

The protein localises to the cytoplasm. The enzyme catalyses tRNA(Ala) + L-alanine + ATP = L-alanyl-tRNA(Ala) + AMP + diphosphate. In terms of biological role, catalyzes the attachment of alanine to tRNA(Ala) in a two-step reaction: alanine is first activated by ATP to form Ala-AMP and then transferred to the acceptor end of tRNA(Ala). Also edits incorrectly charged Ser-tRNA(Ala) and Gly-tRNA(Ala) via its editing domain. This is Alanine--tRNA ligase from Pseudomonas syringae pv. tomato (strain ATCC BAA-871 / DC3000).